Reading from the N-terminus, the 285-residue chain is uncharacterized protein (285 aa).

2 disordered regions span residues 115-139 (AAGKASVQARRSRKEADVQTKQERN) and 152-183 (EHDVNTKATNKDTDKDLKTDPPLNPPRGNRGV). Basic and acidic residues-rich tracts occupy residues 128 to 138 (KEADVQTKQER) and 152 to 170 (EHDVNTKATNKDTDKDLKT).

This is an uncharacterized protein from Escherichia coli (strain K12).